We begin with the raw amino-acid sequence, 164 residues long: Serine/arginine-rich splicing factor 3 (164 aa).

Residue M1 is modified to N-acetylmethionine. Positions 1-90 (MHRDSCPLDC…SNGEKRSRNR (90 aa)) are sufficient for interaction with NXF1 and SRSP. S5 carries the post-translational modification Phosphoserine. One can recognise an RRM domain in the interval 10 to 83 (CKVYVGNLGN…CRVRVELSNG (74 aa)). K23 bears the N6-acetyllysine mark. Positions 81-164 (SNGEKRSRNR…RSRSRSNERK (84 aa)) are disordered. Over residues 107-128 (RSPPPRRRSPRRRSFSRSRSRS) the composition is skewed to basic residues. A B-1 repeat occupies 119–133 (RSFSRSRSRSLSRDR). Positions 119–164 (RSFSRSRSRSLSRDRRRERSLSRERNHKPSRSFSRSRSRSRSNERK) are 2 X approximate repeats, basic. Residues 129 to 142 (LSRDRRRERSLSRE) are compositionally biased toward basic and acidic residues. Positions 143 to 158 (RNHKPSRSFSRSRSRS) are enriched in basic residues. Residues 149–164 (RSFSRSRSRSRSNERK) form a B-2 repeat.

This sequence belongs to the splicing factor SR family. In terms of assembly, interacts with CPSF6. Interacts with RBMY1A1. Interacts with SREK1/SFRS12. Interacts with NXF1. Interacts with YTHDC1, leading to recruitment to RNA elements adjacent to m6A sites. Interacts with SRSP; increases SRSF3 binding to specific exons. In terms of processing, phosphorylated by CLK1, CLK2, CLK3 and CLK4. Extensively phosphorylated on serine residues in the RS domain.

The protein resides in the nucleus. Its subcellular location is the nucleus speckle. It is found in the cytoplasm. In terms of biological role, splicing factor, which binds the consensus motif 5'-C[ACU][AU]C[ACU][AC]C-3' within pre-mRNA and promotes specific exons inclusion during alternative splicing. Interaction with YTHDC1, a RNA-binding protein that recognizes and binds N6-methyladenosine (m6A)-containing RNAs, promotes recruitment of SRSF3 to its mRNA-binding elements adjacent to m6A sites within exons. Also functions as an adapter involved in mRNA nuclear export. Binds mRNA which is thought to be transferred to the NXF1-NXT1 heterodimer for export (TAP/NXF1 pathway); enhances NXF1-NXT1 RNA-binding activity. Involved in nuclear export of m6A-containing mRNAs via interaction with YTHDC1: interaction with YTHDC1 facilitates m6A-containing mRNA-binding to both SRSF3 and NXF1, promoting mRNA nuclear export. The protein is Serine/arginine-rich splicing factor 3 (SRSF3) of Bos taurus (Bovine).